The following is a 107-amino-acid chain: Proteinase inhibitor 1 (107 aa).

A signal peptide spans 1 to 23 (MELKFAHIIVFFLLATSFETLMA). A propeptide spanning residues 24 to 36 (RKESDGPEVIQLL) is cleaved from the precursor.

It belongs to the protease inhibitor I13 (potato type I serine protease inhibitor) family.

In Solanum tuberosum (Potato), this protein is Proteinase inhibitor 1.